The following is a 671-amino-acid chain: DNA ligase (671 aa).

NAD(+) contacts are provided by residues 32 to 36 (DAEYD), 81 to 82 (SL), and E113. The active-site N6-AMP-lysine intermediate is the K115. R136, E173, K290, and K314 together coordinate NAD(+). Zn(2+)-binding residues include C408, C411, C426, and C432. Residues 593 to 671 (EIDSPFAGKT…EAEMIRLLGA (79 aa)) form the BRCT domain.

The protein belongs to the NAD-dependent DNA ligase family. LigA subfamily. Mg(2+) serves as cofactor. Mn(2+) is required as a cofactor.

The enzyme catalyses NAD(+) + (deoxyribonucleotide)n-3'-hydroxyl + 5'-phospho-(deoxyribonucleotide)m = (deoxyribonucleotide)n+m + AMP + beta-nicotinamide D-nucleotide.. DNA ligase that catalyzes the formation of phosphodiester linkages between 5'-phosphoryl and 3'-hydroxyl groups in double-stranded DNA using NAD as a coenzyme and as the energy source for the reaction. It is essential for DNA replication and repair of damaged DNA. The sequence is that of DNA ligase from Salmonella paratyphi C (strain RKS4594).